A 449-amino-acid chain; its full sequence is Cysteine--tRNA ligase (449 aa).

Zn(2+) is bound at residue C29. Residues 31–41 (PTVYDHLHIGN) carry the 'HIGH' region motif. Residues C211, H236, and E240 each coordinate Zn(2+). Residues 269 to 273 (KMSKS) carry the 'KMSKS' region motif. K272 serves as a coordination point for ATP.

It belongs to the class-I aminoacyl-tRNA synthetase family. As to quaternary structure, monomer. Requires Zn(2+) as cofactor.

The protein localises to the cytoplasm. It catalyses the reaction tRNA(Cys) + L-cysteine + ATP = L-cysteinyl-tRNA(Cys) + AMP + diphosphate. The chain is Cysteine--tRNA ligase from Methylocella silvestris (strain DSM 15510 / CIP 108128 / LMG 27833 / NCIMB 13906 / BL2).